A 762-amino-acid polypeptide reads, in one-letter code: 5-methyltetrahydropteroyltriglutamate--homocysteine methyltransferase (762 aa).

5-methyltetrahydropteroyltri-L-glutamate is bound by residues 17-20 and lysine 111; that span reads REWK. L-homocysteine contacts are provided by residues 435–437 and glutamate 488; that span reads IGS. L-methionine-binding positions include 435–437 and glutamate 488; that span reads IGS. 5-methyltetrahydropteroyltri-L-glutamate contacts are provided by residues 519–520 and tryptophan 565; that span reads RC. L-homocysteine is bound at residue aspartate 603. Position 603 (aspartate 603) interacts with L-methionine. A 5-methyltetrahydropteroyltri-L-glutamate-binding site is contributed by glutamate 609. The Zn(2+) site is built by histidine 645, cysteine 647, and glutamate 669. The active-site Proton donor is histidine 698. Position 730 (cysteine 730) interacts with Zn(2+).

It belongs to the vitamin-B12 independent methionine synthase family. Requires Zn(2+) as cofactor.

It catalyses the reaction 5-methyltetrahydropteroyltri-L-glutamate + L-homocysteine = tetrahydropteroyltri-L-glutamate + L-methionine. It functions in the pathway amino-acid biosynthesis; L-methionine biosynthesis via de novo pathway; L-methionine from L-homocysteine (MetE route): step 1/1. Catalyzes the transfer of a methyl group from 5-methyltetrahydrofolate to homocysteine resulting in methionine formation. The protein is 5-methyltetrahydropteroyltriglutamate--homocysteine methyltransferase of Bacillus cytotoxicus (strain DSM 22905 / CIP 110041 / 391-98 / NVH 391-98).